The chain runs to 357 residues: tRNA N6-adenosine threonylcarbamoyltransferase (357 aa).

Fe cation-binding residues include histidine 120 and histidine 124. Residues 143–147, aspartate 176, glycine 189, and asparagine 289 contribute to the substrate site; that span reads LVSGG. Aspartate 317 lines the Fe cation pocket.

It belongs to the KAE1 / TsaD family. It depends on Fe(2+) as a cofactor.

It is found in the cytoplasm. The enzyme catalyses L-threonylcarbamoyladenylate + adenosine(37) in tRNA = N(6)-L-threonylcarbamoyladenosine(37) in tRNA + AMP + H(+). In terms of biological role, required for the formation of a threonylcarbamoyl group on adenosine at position 37 (t(6)A37) in tRNAs that read codons beginning with adenine. Is involved in the transfer of the threonylcarbamoyl moiety of threonylcarbamoyl-AMP (TC-AMP) to the N6 group of A37, together with TsaE and TsaB. TsaD likely plays a direct catalytic role in this reaction. This chain is tRNA N6-adenosine threonylcarbamoyltransferase, found in Polynucleobacter necessarius subsp. necessarius (strain STIR1).